The primary structure comprises 317 residues: Melanocyte-stimulating hormone receptor (317 aa).

At 1–37 the chain is on the extracellular side; sequence MPVQGSQRRLLGSLNSTPTATPHLGLAANQTGARCLE. N29 is a glycosylation site (N-linked (GlcNAc...) asparagine). The helical transmembrane segment at 38-63 threads the bilayer; sequence VSIPDGLFLSLGLVSLVENVLVVTAI. Residues 64 to 72 lie on the Cytoplasmic side of the membrane; the sequence is AKNRNLHSP. Residues 73–93 traverse the membrane as a helical segment; it reads MYCFICCLALSDLLVSGSNML. The Extracellular segment spans residues 94 to 118; it reads ETAVILLLEAGALAARAAVVQQLDN. The helical transmembrane segment at 119-140 threads the bilayer; sequence VIDVITCSSMLASLCFLGAIAV. The Cytoplasmic portion of the chain corresponds to 141-163; it reads DRYISIFYALRYHSIVTLPRARR. Residues 164–183 form a helical membrane-spanning segment; the sequence is AVAAIWVASVLFSMLFIAYY. At 184 to 191 the chain is on the extracellular side; the sequence is DHAAVLLC. A helical membrane pass occupies residues 192–211; the sequence is LVVFFLAMLVLMAVLYIHML. The Cytoplasmic portion of the chain corresponds to 212–240; the sequence is ARARQHAQGIARLHKRQCPAHQGFGLKGA. A helical transmembrane segment spans residues 241 to 266; the sequence is ATLTILLGIFFLCWGPFFLHLTLIVL. At 267-279 the chain is on the extracellular side; that stretch reads CPQHPTCSCIFKN. A helical membrane pass occupies residues 280–300; it reads FNLFLALIICNAIIDPLIYAF. Residues 301-317 are Cytoplasmic-facing; the sequence is RSQELRRTLKEVLLCSW. Residue C315 is the site of S-palmitoyl cysteine attachment.

Belongs to the G-protein coupled receptor 1 family. As to quaternary structure, interacts with MGRN1, but does not undergo MGRN1-mediated ubiquitination; this interaction competes with GNAS-binding and thus inhibits agonist-induced cAMP production. Interacts with OPN3; the interaction results in a decrease in MC1R-mediated cAMP signaling and ultimately a decrease in melanin production in melanocytes.

Its subcellular location is the cell membrane. Its function is as follows. Receptor for MSH (alpha, beta and gamma) and ACTH. The activity of this receptor is mediated by G proteins which activate adenylate cyclase. Mediates melanogenesis, the production of eumelanin (black/brown) and phaeomelanin (red/yellow), via regulation of cAMP signaling in melanocytes. The polypeptide is Melanocyte-stimulating hormone receptor (MC1R) (Cercopithecus mitis (Blue monkey)).